Consider the following 315-residue polypeptide: C1GALT1-specific chaperone 1-like protein (315 aa).

At 1–8 (MVSASGTS) the chain is on the cytoplasmic side. The chain crosses the membrane as a helical; Signal-anchor for type II membrane protein span at residues 9-29 (FFKGMLLGSISWVLITMFGQI). Over 30–315 (HIRHRGQTQD…FLPPVGSEND (286 aa)) the chain is Lumenal. N-linked (GlcNAc...) asparagine glycans are attached at residues N55 and N301.

The protein belongs to the glycosyltransferase 31 family. Beta3-Gal-T subfamily.

It localises to the membrane. The sequence is that of C1GALT1-specific chaperone 1-like protein from Homo sapiens (Human).